Here is a 443-residue protein sequence, read N- to C-terminus: 23S rRNA (uracil(1939)-C(5))-methyltransferase RlmD (443 aa).

The TRAM domain maps to 4-66; it reads QNRFDRTSFQ…RHFDEARVVE (63 aa). C79, C85, C88, and C167 together coordinate [4Fe-4S] cluster. The S-adenosyl-L-methionine site is built by Q275, F304, N309, E325, D352, and D373. C399 acts as the Nucleophile in catalysis.

It belongs to the class I-like SAM-binding methyltransferase superfamily. RNA M5U methyltransferase family. RlmD subfamily.

It catalyses the reaction uridine(1939) in 23S rRNA + S-adenosyl-L-methionine = 5-methyluridine(1939) in 23S rRNA + S-adenosyl-L-homocysteine + H(+). Catalyzes the formation of 5-methyl-uridine at position 1939 (m5U1939) in 23S rRNA. This chain is 23S rRNA (uracil(1939)-C(5))-methyltransferase RlmD, found in Xylella fastidiosa (strain Temecula1 / ATCC 700964).